The chain runs to 163 residues: Jun dimerization protein 2 (163 aa).

Disordered regions lie at residues 1 to 20 and 59 to 89; these read MMPGQIPDPSVTAGSLPGLG and KRPQPVKSELDEEEERRKRRREKNKVAAARC. A Glycyl lysine isopeptide (Lys-Gly) (interchain with G-Cter in SUMO2) cross-link involves residue lysine 65. One can recognise a bZIP domain in the interval 72 to 135; it reads EERRKRRREK…QQLILMLNRH (64 aa). The segment at 74 to 96 is basic motif; it reads RRKRRREKNKVAAARCRNKKKER. The leucine-zipper stretch occupies residues 100–128; the sequence is LQRESERLELMNAELKTQIEELKLERQQL. A Phosphothreonine; by MAPK8 modification is found at threonine 148.

Belongs to the bZIP family. ATF subfamily. In terms of assembly, forms a homodimer or heterodimer with JUN, JUNB, JUND, CEBPG and ATF2 thereby inhibiting transactivation by JUN, ATF2 and CEBPG. Binds multiple DNA elements such as cAMP-response element (CRE) and TPA response element (TRE) either as homodimer or heterodimer. Interacts with IRF2BP1. Post-translationally, phosphorylation of Thr-148 by MAPK8 in response to different stress conditions such as, UV irradiation, oxidatives stress and anisomycin treatments. Polyubiquitinated; probably by IRF2BP1. As to expression, ubiquitously expressed in all adult tissues tested as well in embryos.

Its subcellular location is the nucleus. Its function is as follows. Component of the AP-1 transcription factor that represses transactivation mediated by the Jun family of proteins. Involved in a variety of transcriptional responses associated with AP-1, such as UV-induced apoptosis, cell differentiation, tumorigenesis and antitumogeneris. Can also function as a repressor by recruiting histone deacetylase 3/HDAC3 to the promoter region of JUN. May control transcription via direct regulation of the modification of histones and the assembly of chromatin. The protein is Jun dimerization protein 2 (Jdp2) of Mus musculus (Mouse).